The primary structure comprises 655 residues: Very long-chain specific acyl-CoA dehydrogenase, mitochondrial (655 aa).

The N-terminal 40 residues, 1 to 40, are a transit peptide targeting the mitochondrion; that stretch reads MRAARMAQSTGRQLLRLRGVSSWPGELLGQPRPGPARRPY. The tract at residues 22–66 is disordered; the sequence is SWPGELLGQPRPGPARRPYASGVAQAAVDQSDSQPSEASTREKRA. Positions 41 to 482 are catalytic; sequence ASGVAQAAVD…ALQGCMDKGK (442 aa). A compositionally biased stretch (polar residues) spans 49 to 59; that stretch reads VDQSDSQPSEA. Lys-71 is modified (N6-acetyllysine; alternate). Residue Lys-71 is modified to N6-succinyllysine; alternate. Lys-195 bears the N6-succinyllysine mark. 214 to 223 is a binding site for FAD; the sequence is FCLTEPSSGS. Cys-237 is modified (S-nitrosocysteine). At Lys-239 the chain carries N6-acetyllysine; alternate. An N6-succinyllysine; alternate modification is found at Lys-239. Position 249–251 (249–251) interacts with FAD; it reads WIS. Lys-276 and Lys-278 each carry N6-acetyllysine; alternate. N6-succinyllysine; alternate is present on residues Lys-276 and Lys-278. At Lys-298 the chain carries N6-acetyllysine. Lys-331 carries the post-translational modification N6-acetyllysine; alternate. N6-succinyllysine; alternate is present on Lys-331. N6-succinyllysine is present on Lys-372. 461 to 463 contacts substrate; that stretch reads FEG. Glu-462 functions as the Proton acceptor in the catalytic mechanism. Residue 464–466 participates in FAD binding; that stretch reads TND. Lys-482 bears the N6-acetyllysine; alternate mark. The residue at position 482 (Lys-482) is an N6-succinyllysine; alternate. The interval 483–516 is membrane-anchoring; it reads ELSGLGNALKNPFGNAGLLLGEAGKQLRRRAGLG. A phosphoserine mark is found at Ser-517 and Ser-522. At Lys-550 the chain carries N6-acetyllysine. N6-acetyllysine; alternate is present on Lys-556. Position 556 is an N6-succinyllysine; alternate (Lys-556). Gln-562 serves as a coordination point for FAD. Lys-639 bears the N6-succinyllysine mark.

The protein belongs to the acyl-CoA dehydrogenase family. Homodimer. Homodimerizes after import into the mitochondrion. FAD serves as cofactor. In terms of processing, S-nitrosylation at Cys-237 in liver improves catalytic efficiency.

It is found in the mitochondrion inner membrane. It carries out the reaction a very-long-chain 2,3-saturated fatty acyl-CoA + oxidized [electron-transfer flavoprotein] + H(+) = a very-long-chain (2E)-enoyl-CoA + reduced [electron-transfer flavoprotein]. The catalysed reaction is dodecanoyl-CoA + oxidized [electron-transfer flavoprotein] + H(+) = (2E)-dodecenoyl-CoA + reduced [electron-transfer flavoprotein]. It catalyses the reaction tetradecanoyl-CoA + oxidized [electron-transfer flavoprotein] + H(+) = (2E)-tetradecenoyl-CoA + reduced [electron-transfer flavoprotein]. The enzyme catalyses oxidized [electron-transfer flavoprotein] + hexadecanoyl-CoA + H(+) = (2E)-hexadecenoyl-CoA + reduced [electron-transfer flavoprotein]. It carries out the reaction octadecanoyl-CoA + oxidized [electron-transfer flavoprotein] + H(+) = (2E)-octadecenoyl-CoA + reduced [electron-transfer flavoprotein]. The catalysed reaction is eicosanoyl-CoA + oxidized [electron-transfer flavoprotein] + H(+) = (2E)-eicosenoyl-CoA + reduced [electron-transfer flavoprotein]. It catalyses the reaction docosanoyl-CoA + oxidized [electron-transfer flavoprotein] + H(+) = (2E)-docosenoyl-CoA + reduced [electron-transfer flavoprotein]. The enzyme catalyses tetracosanoyl-CoA + oxidized [electron-transfer flavoprotein] + H(+) = (2E)-tetracosenoyl-CoA + reduced [electron-transfer flavoprotein]. It participates in lipid metabolism; mitochondrial fatty acid beta-oxidation. Functionally, very long-chain specific acyl-CoA dehydrogenase is one of the acyl-CoA dehydrogenases that catalyze the first step of mitochondrial fatty acid beta-oxidation, an aerobic process breaking down fatty acids into acetyl-CoA and allowing the production of energy from fats. The first step of fatty acid beta-oxidation consists in the removal of one hydrogen from C-2 and C-3 of the straight-chain fatty acyl-CoA thioester, resulting in the formation of trans-2-enoyl-CoA. Among the different mitochondrial acyl-CoA dehydrogenases, very long-chain specific acyl-CoA dehydrogenase acts specifically on acyl-CoAs with saturated 12 to 24 carbons long primary chains. The polypeptide is Very long-chain specific acyl-CoA dehydrogenase, mitochondrial (Bos taurus (Bovine)).